A 319-amino-acid chain; its full sequence is Lipoyl synthase (319 aa).

The segment at 5-31 is disordered; it reads LDTISANPVRPRHPEKANRPDALSPPK. Residues Cys-61, Cys-66, Cys-72, Cys-87, Cys-91, Cys-94, and Ser-300 each contribute to the [4Fe-4S] cluster site. In terms of domain architecture, Radical SAM core spans 73-289; sequence WDKKHATFMI…ETVAYTKGFL (217 aa).

Belongs to the radical SAM superfamily. Lipoyl synthase family. Requires [4Fe-4S] cluster as cofactor.

The protein localises to the cytoplasm. It carries out the reaction [[Fe-S] cluster scaffold protein carrying a second [4Fe-4S](2+) cluster] + N(6)-octanoyl-L-lysyl-[protein] + 2 oxidized [2Fe-2S]-[ferredoxin] + 2 S-adenosyl-L-methionine + 4 H(+) = [[Fe-S] cluster scaffold protein] + N(6)-[(R)-dihydrolipoyl]-L-lysyl-[protein] + 4 Fe(3+) + 2 hydrogen sulfide + 2 5'-deoxyadenosine + 2 L-methionine + 2 reduced [2Fe-2S]-[ferredoxin]. It functions in the pathway protein modification; protein lipoylation via endogenous pathway; protein N(6)-(lipoyl)lysine from octanoyl-[acyl-carrier-protein]: step 2/2. In terms of biological role, catalyzes the radical-mediated insertion of two sulfur atoms into the C-6 and C-8 positions of the octanoyl moiety bound to the lipoyl domains of lipoate-dependent enzymes, thereby converting the octanoylated domains into lipoylated derivatives. The polypeptide is Lipoyl synthase (Nitrobacter winogradskyi (strain ATCC 25391 / DSM 10237 / CIP 104748 / NCIMB 11846 / Nb-255)).